The primary structure comprises 610 residues: POU domain, class 6, transcription factor 1 (610 aa).

The tract at residues 55–87 (SSAGAAESGGDEEGSGQSLEATEEAQLDGPVTT) is disordered. The region spanning 448-522 (EEAINLEEIR…VLERWLAEAE (75 aa)) is the POU-specific domain. The homeobox DNA-binding region spans 543 to 602 (KRKRRTSFTPQAIEVLNTYFEKNSLPTGQEITEIAKELNYDREVVRVWFCNRRQTLKNTS).

The protein belongs to the POU transcription factor family. Class-6 subfamily. As to expression, ubiquitously expressed during embryogenesis.

It is found in the nucleus. Functionally, transcription factor that binds with high affinity to the motif 5'-TAATGARAT-3'. In Danio rerio (Zebrafish), this protein is POU domain, class 6, transcription factor 1 (pou6f1).